The sequence spans 457 residues: Fibrinogen C domain-containing protein 1-B (457 aa).

The disordered stretch occupies residues 1-21 (MGSDRWKNIRGTPQMEDSVQE). At 1–33 (MGSDRWKNIRGTPQMEDSVQEKSQRKGCGYILC) the chain is on the cytoplasmic side. Residues 34-54 (TVLLSVAVLLAVTVTGAVLFM) form a helical; Signal-anchor for type II membrane protein membrane-spanning segment. The Extracellular segment spans residues 55–457 (NQYHAPSTEP…MKIRPQREEN (403 aa)). The Fibrinogen C-terminal domain occupies 231–454 (CANGSKPRDC…FTEMKIRPQR (224 aa)). N-linked (GlcNAc...) asparagine glycosylation is present at Asn-233. Cys-240 and Cys-269 form a disulfide bridge. A glycan (N-linked (GlcNAc...) asparagine) is linked at Asn-336. 2 residues coordinate Ca(2+): Asp-389 and Asp-391. The cysteines at positions 397 and 410 are disulfide-linked.

Homotetramer; disulfide-linked.

The protein localises to the membrane. In terms of biological role, acetyl group-binding receptor which shows a calcium-dependent binding to acetylated structures such as chitin, some N-acetylated carbohydrates, and amino acids. The protein is Fibrinogen C domain-containing protein 1-B (fibcd1-b) of Xenopus laevis (African clawed frog).